The primary structure comprises 85 residues: WAP four-disulfide core domain protein 12 (85 aa).

An N-terminal signal peptide occupies residues 1-21; the sequence is MWPNSILVLMTLLISSTLVTG. A WAP domain is found at 25 to 72; sequence KGEEKRVCPPDYVRCIRQDDPQCYSDNDCGDQEICCFWQCGFKCVLPV. Cystine bridges form between Cys32-Cys60, Cys39-Cys64, Cys47-Cys59, and Cys53-Cys68.

Constitutively expressed in tongue.

Its subcellular location is the secreted. In terms of biological role, antibacterial protein which inhibits the growth of E.coli and S.aureus. Putative acid-stable proteinase inhibitor. This Mus musculus (Mouse) protein is WAP four-disulfide core domain protein 12.